The chain runs to 315 residues: Methionyl-tRNA formyltransferase (315 aa).

113 to 116 (SILP) lines the (6S)-5,6,7,8-tetrahydrofolate pocket.

Belongs to the Fmt family.

It carries out the reaction L-methionyl-tRNA(fMet) + (6R)-10-formyltetrahydrofolate = N-formyl-L-methionyl-tRNA(fMet) + (6S)-5,6,7,8-tetrahydrofolate + H(+). In terms of biological role, attaches a formyl group to the free amino group of methionyl-tRNA(fMet). The formyl group appears to play a dual role in the initiator identity of N-formylmethionyl-tRNA by promoting its recognition by IF2 and preventing the misappropriation of this tRNA by the elongation apparatus. This is Methionyl-tRNA formyltransferase from Aliivibrio fischeri (strain MJ11) (Vibrio fischeri).